A 206-amino-acid chain; its full sequence is Protein YmaB (206 aa).

This Bacillus subtilis (strain 168) protein is Protein YmaB (ymaB).